Here is a 30-residue protein sequence, read N- to C-terminus: Scolopendra 20528.11 Da toxin (30 aa).

This sequence belongs to the CRISP family. Venom allergen 5-like subfamily. Post-translationally, contains 3 disulfide bonds. In terms of tissue distribution, expressed by the venom gland.

The protein resides in the secreted. In Scolopendra angulata (Barbados giant red centipede), this protein is Scolopendra 20528.11 Da toxin.